We begin with the raw amino-acid sequence, 201 residues long: Ribosome maturation factor RimM (201 aa).

In terms of domain architecture, PRC barrel spans 94 to 168 (EDEYYHADLI…RLVADPPLGL (75 aa)). A disordered region spans residues 164–201 (PPLGLLDDTRPPAGVEGEVEEDPGVGIDEDGDGKGGAS). Residues 180-194 (GEVEEDPGVGIDEDG) are compositionally biased toward acidic residues.

The protein belongs to the RimM family. As to quaternary structure, binds ribosomal protein uS19.

Its subcellular location is the cytoplasm. Its function is as follows. An accessory protein needed during the final step in the assembly of 30S ribosomal subunit, possibly for assembly of the head region. Essential for efficient processing of 16S rRNA. May be needed both before and after RbfA during the maturation of 16S rRNA. It has affinity for free ribosomal 30S subunits but not for 70S ribosomes. In Rhodospirillum rubrum (strain ATCC 11170 / ATH 1.1.1 / DSM 467 / LMG 4362 / NCIMB 8255 / S1), this protein is Ribosome maturation factor RimM.